We begin with the raw amino-acid sequence, 718 residues long: Ophiobolin F synthase oblA (718 aa).

The interval 1-320 (MACKYSTLID…RYNGPTKFNE (320 aa)) is (7Z)-ophiobola-7,19-dien-3-ol synthase. 2 residues coordinate Mg(2+): Asp-93 and Asp-97. Residue Asp-93 coordinates substrate. The short motif at 93-97 (DDVID) is the DDXXD 1 element. Residues 180-183 (RALD), Asn-224, 228-232 (SFEKE), and 311-312 (RY) contribute to the substrate site. The short motif at 224 to 232 (NDLFSFEKE) is the NSE/DTE element. A geranylfarnesyl diphosphate synthase region spans residues 321 to 718 (LQLLRSEHGL…LRVMLELLKV (398 aa)). The interval 346 to 391 (LVEGDCHESKPNELKRKRNGVSVDDEMRTNGTNGAKKPAHVSQPST) is disordered. Positions 349 to 359 (GDCHESKPNEL) are enriched in basic and acidic residues. Isopentenyl diphosphate contacts are provided by Lys-429, Arg-432, and His-461. Residues Asp-468 and Asp-472 each coordinate Mg(2+). The short motif at 468-472 (DDLED) is the DDXXD 2 element. Position 477 (Arg-477) interacts with dimethylallyl diphosphate. Arg-478 lines the isopentenyl diphosphate pocket. Dimethylallyl diphosphate is bound by residues Lys-555, Thr-556, Gln-594, Asn-601, Lys-611, and Lys-621.

In the N-terminal section; belongs to the terpene synthase family. The protein in the C-terminal section; belongs to the FPP/GGPP synthase family. Mg(2+) serves as cofactor.

The catalysed reaction is isopentenyl diphosphate + (2E,6E)-farnesyl diphosphate = (2E,6E,10E)-geranylgeranyl diphosphate + diphosphate. It carries out the reaction isopentenyl diphosphate + (2E,6E,10E)-geranylgeranyl diphosphate = (2E,6E,10E,14E)-geranylfarnesyl diphosphate + diphosphate. It catalyses the reaction (2E,6E,10E,14E)-geranylfarnesyl diphosphate + H2O = ophiobolin F + diphosphate. It functions in the pathway secondary metabolite biosynthesis; terpenoid biosynthesis. Its function is as follows. Bifunctional sesterterpene synthase; part of the gene cluster that mediates the biosynthesis of the sesterterpenes ophiobolins, fungal phytotoxins with potential anti-cancer activities. The first step of the pathway is performed by the sesterterpene synthase oblA that possesses both prenyl transferase and terpene cyclase activity, converting isopentenyl diphosphate and dimethylallyl diphosphate into geranylfarnesyl diphosphate (GFPP) and further converting GFPP into ophiobolin F, respectively. Other sesterterpenoids (C(25) terpenoids) are found as minor products of oblA. It is expected that ophiobolin F is then oxidized to ophiobolin A via ophiobolin C and ophiobolin B intermediates by the combined action of the cytochrome P450 monooxygenase oblB and the FAD-dependent oxidoreductase oblC. Although oblB catalyzes multistep oxygenations at C5 and C21/C7 in a relatively efficient manner, it is unable to convert ophiobolin F to ophiobolin C and produces instead several unexpected derivatives. The polypeptide is Ophiobolin F synthase oblA (Aspergillus clavatus (strain ATCC 1007 / CBS 513.65 / DSM 816 / NCTC 3887 / NRRL 1 / QM 1276 / 107)).